The primary structure comprises 166 residues: Small ribosomal subunit protein uS5 (166 aa).

In terms of domain architecture, S5 DRBM spans 12–75 (YIEKLVQVNR…EAARRNMIQV (64 aa)).

This sequence belongs to the universal ribosomal protein uS5 family. In terms of assembly, part of the 30S ribosomal subunit. Contacts proteins S4 and S8.

With S4 and S12 plays an important role in translational accuracy. Functionally, located at the back of the 30S subunit body where it stabilizes the conformation of the head with respect to the body. This chain is Small ribosomal subunit protein uS5, found in Pseudomonas putida (strain ATCC 700007 / DSM 6899 / JCM 31910 / BCRC 17059 / LMG 24140 / F1).